We begin with the raw amino-acid sequence, 140 residues long: Class I hydrophobin C (140 aa).

The N-terminal stretch at 1–23 (MKFFVPAFLFAATAMALPGSGSA) is a signal peptide. 4 disulfide bridges follow: C41/C114, C49/C108, C50/C85, and C115/C133.

This sequence belongs to the fungal hydrophobin family.

Its subcellular location is the secreted. The protein resides in the cell wall. Functionally, aerial growth, conidiation, and dispersal of filamentous fungi in the environment rely upon a capability of their secreting small amphipathic proteins called hydrophobins (HPBs) with low sequence identity. Class I can self-assemble into an outermost layer of rodlet bundles on aerial cell surfaces, conferring cellular hydrophobicity that supports fungal growth, development and dispersal; whereas Class II form highly ordered films at water-air interfaces through intermolecular interactions but contribute nothing to the rodlet structure. In P.expansum, hydrophobins contribute to germination, tolerance to cold stress and mycotoxins patulin and citrinin production. HfbC is involved in the virulence on apple. The sequence is that of Class I hydrophobin C from Penicillium expansum (Blue mold rot fungus).